We begin with the raw amino-acid sequence, 125 residues long: Probable growth factor FPV211 (125 aa).

An N-terminal signal peptide occupies residues 1 to 48 (MKEPLIEVKREYNLIKTLTGKKFVVSTSIVVVLLIINMIFYGIRIHEL). The 41-residue stretch at 80–120 (LFEKCKSKFNNFCIYGECMNIINLDKKFCICNKGYTGNRCD) folds into the EGF-like domain. Cystine bridges form between Cys-84–Cys-97, Cys-92–Cys-108, and Cys-110–Cys-119.

It localises to the secreted. The chain is Probable growth factor FPV211 from Vertebrata (FPV).